A 265-amino-acid polypeptide reads, in one-letter code: 4-hydroxy-tetrahydrodipicolinate reductase (265 aa).

NAD(+) is bound by residues 7-12 (GASGRM) and Asp33. Arg34 provides a ligand contact to NADP(+). NAD(+)-binding positions include 96 to 98 (GTT) and 120 to 123 (AANM). Catalysis depends on His153, which acts as the Proton donor/acceptor. His154 is a binding site for (S)-2,3,4,5-tetrahydrodipicolinate. Residue Lys157 is the Proton donor of the active site. Residue 163-164 (GT) participates in (S)-2,3,4,5-tetrahydrodipicolinate binding.

Belongs to the DapB family.

The protein resides in the cytoplasm. It carries out the reaction (S)-2,3,4,5-tetrahydrodipicolinate + NAD(+) + H2O = (2S,4S)-4-hydroxy-2,3,4,5-tetrahydrodipicolinate + NADH + H(+). The enzyme catalyses (S)-2,3,4,5-tetrahydrodipicolinate + NADP(+) + H2O = (2S,4S)-4-hydroxy-2,3,4,5-tetrahydrodipicolinate + NADPH + H(+). It participates in amino-acid biosynthesis; L-lysine biosynthesis via DAP pathway; (S)-tetrahydrodipicolinate from L-aspartate: step 4/4. In terms of biological role, catalyzes the conversion of 4-hydroxy-tetrahydrodipicolinate (HTPA) to tetrahydrodipicolinate. The chain is 4-hydroxy-tetrahydrodipicolinate reductase from Burkholderia orbicola (strain AU 1054).